Here is a 400-residue protein sequence, read N- to C-terminus: Phosphoglycerate kinase (400 aa).

Residues D23–N25, R38, H61–R64, R120, and R153 each bind substrate. Residues K203, E325, and G355–T358 contribute to the ATP site.

It belongs to the phosphoglycerate kinase family. Monomer.

Its subcellular location is the cytoplasm. It catalyses the reaction (2R)-3-phosphoglycerate + ATP = (2R)-3-phospho-glyceroyl phosphate + ADP. It functions in the pathway carbohydrate degradation; glycolysis; pyruvate from D-glyceraldehyde 3-phosphate: step 2/5. This Methylorubrum extorquens (strain PA1) (Methylobacterium extorquens) protein is Phosphoglycerate kinase.